Reading from the N-terminus, the 196-residue chain is Dephospho-CoA kinase (196 aa).

The 191-residue stretch at 6-196 (AIALTGGIGT…QVERFLKTLL (191 aa)) folds into the DPCK domain. Residue 14–19 (GTGKST) coordinates ATP.

It belongs to the CoaE family.

The protein localises to the cytoplasm. It catalyses the reaction 3'-dephospho-CoA + ATP = ADP + CoA + H(+). The protein operates within cofactor biosynthesis; coenzyme A biosynthesis; CoA from (R)-pantothenate: step 5/5. Functionally, catalyzes the phosphorylation of the 3'-hydroxyl group of dephosphocoenzyme A to form coenzyme A. The sequence is that of Dephospho-CoA kinase from Helicobacter pylori (strain ATCC 700392 / 26695) (Campylobacter pylori).